Consider the following 207-residue polypeptide: ATP-dependent Clp protease proteolytic subunit (207 aa).

The active-site Nucleophile is serine 111. Histidine 136 is an active-site residue.

It belongs to the peptidase S14 family. Fourteen ClpP subunits assemble into 2 heptameric rings which stack back to back to give a disk-like structure with a central cavity, resembling the structure of eukaryotic proteasomes. Component of the ClpAP and ClpXP complexes.

It is found in the cytoplasm. The catalysed reaction is Hydrolysis of proteins to small peptides in the presence of ATP and magnesium. alpha-casein is the usual test substrate. In the absence of ATP, only oligopeptides shorter than five residues are hydrolyzed (such as succinyl-Leu-Tyr-|-NHMec, and Leu-Tyr-Leu-|-Tyr-Trp, in which cleavage of the -Tyr-|-Leu- and -Tyr-|-Trp bonds also occurs).. Its function is as follows. Cleaves peptides in various proteins in a process that requires ATP hydrolysis. Has a chymotrypsin-like activity. Plays a major role in the degradation of misfolded proteins. In Salmonella enteritidis PT4 (strain P125109), this protein is ATP-dependent Clp protease proteolytic subunit.